We begin with the raw amino-acid sequence, 151 residues long: Large ribosomal subunit protein uL22c (151 aa).

It belongs to the universal ribosomal protein uL22 family. Part of the 50S ribosomal subunit.

The protein localises to the plastid. Its subcellular location is the chloroplast. This protein binds specifically to 23S rRNA. In terms of biological role, the globular domain of the protein is located near the polypeptide exit tunnel on the outside of the subunit, while an extended beta-hairpin is found that lines the wall of the exit tunnel in the center of the 70S ribosome. In Gossypium barbadense (Sea Island cotton), this protein is Large ribosomal subunit protein uL22c (rpl22).